The sequence spans 100 residues: Putative pterin-4-alpha-carbinolamine dehydratase (100 aa).

It belongs to the pterin-4-alpha-carbinolamine dehydratase family.

The catalysed reaction is (4aS,6R)-4a-hydroxy-L-erythro-5,6,7,8-tetrahydrobiopterin = (6R)-L-erythro-6,7-dihydrobiopterin + H2O. The sequence is that of Putative pterin-4-alpha-carbinolamine dehydratase from Alteromonas mediterranea (strain DSM 17117 / CIP 110805 / LMG 28347 / Deep ecotype).